Here is a 145-residue protein sequence, read N- to C-terminus: Ribonuclease H (145 aa).

The RNase H type-1 domain maps to 1–141 (MQEVELFTDG…VDELANQAMD (141 aa)). Mg(2+) contacts are provided by aspartate 9, glutamate 47, aspartate 69, and aspartate 133.

Belongs to the RNase H family. As to quaternary structure, monomer. Requires Mg(2+) as cofactor.

It localises to the cytoplasm. The enzyme catalyses Endonucleolytic cleavage to 5'-phosphomonoester.. Functionally, endonuclease that specifically degrades the RNA of RNA-DNA hybrids. The chain is Ribonuclease H from Hydrogenovibrio crunogenus (strain DSM 25203 / XCL-2) (Thiomicrospira crunogena).